Consider the following 333-residue polypeptide: T-cell surface glycoprotein CD1b-1 (333 aa).

The signal sequence occupies residues Met1–Asn18. Over Glu19 to Gly302 the chain is Extracellular. 4 N-linked (GlcNAc...) asparagine glycosylation sites follow: Asn38, Asn75, Asn146, and Asn258. 2 disulfides stabilise this stretch: Cys120/Cys184 and Cys224/Cys279. Positions Pro185–Trp295 constitute an Ig-like domain. A helical membrane pass occupies residues Leu303–Phe323. The Cytoplasmic segment spans residues Trp324–Leu333. The short motif at Tyr329–Ile332 is the Internalization signal element.

Heterodimer with B2M (beta-2-microglobulin). Interacts with saposin C.

The protein resides in the cell membrane. It localises to the endosome membrane. It is found in the lysosome membrane. Its function is as follows. Antigen-presenting protein that binds self and non-self lipid and glycolipid antigens and presents them to T-cell receptors on natural killer T-cells. The sequence is that of T-cell surface glycoprotein CD1b-1 from Ovis aries (Sheep).